The sequence spans 420 residues: uncharacterized protein (420 aa).

A signal peptide spans 1–25 (MRYAMNKIPALLLVGALIIATVASG). Cys26 is subject to N-acetylcysteine. Residue Cys26 is the site of S-archaeol cysteine attachment.

It belongs to the bacterial solute-binding protein 1 family.

Its subcellular location is the cell membrane. Functionally, probably part of a binding-protein-dependent transport system PH1036/38/39. This is an uncharacterized protein from Pyrococcus horikoshii (strain ATCC 700860 / DSM 12428 / JCM 9974 / NBRC 100139 / OT-3).